We begin with the raw amino-acid sequence, 313 residues long: Pseudouridine-5'-phosphate glycosidase (313 aa).

Catalysis depends on glutamate 26, which acts as the Proton donor. Lysine 87 and alanine 107 together coordinate substrate. Aspartate 139 provides a ligand contact to Mn(2+). Substrate is bound at residue 141 to 143 (SAD). The active-site Nucleophile is the lysine 160.

This sequence belongs to the pseudouridine-5'-phosphate glycosidase family. As to quaternary structure, homotrimer. The cofactor is Mn(2+).

The catalysed reaction is D-ribose 5-phosphate + uracil = psi-UMP + H2O. Catalyzes the reversible cleavage of pseudouridine 5'-phosphate (PsiMP) to ribose 5-phosphate and uracil. Functions biologically in the cleavage direction, as part of a pseudouridine degradation pathway. The protein is Pseudouridine-5'-phosphate glycosidase of Corynebacterium aurimucosum (strain ATCC 700975 / DSM 44827 / CIP 107346 / CN-1) (Corynebacterium nigricans).